The sequence spans 90 residues: U7-theraphotoxin-Hhn1c (90 aa).

The N-terminal stretch at 1-19 is a signal peptide; sequence MKTAIFTVVLALAVFAVLS. A propeptide spanning residues 20–50 is cleaved from the precursor; that stretch reads FGWEANEKALSEEFTELIHEKEAASETEARE. 3 cysteine pairs are disulfide-bonded: Cys-51-Cys-65, Cys-58-Cys-70, and Cys-64-Cys-81.

This sequence belongs to the neurotoxin 10 (Hwtx-1) family. 13 (Hntx-13) subfamily. In terms of tissue distribution, expressed by the venom gland.

The protein localises to the secreted. In terms of biological role, ion channel inhibitor. The chain is U7-theraphotoxin-Hhn1c from Cyriopagopus hainanus (Chinese bird spider).